The following is a 291-amino-acid chain: G1/S-specific cyclin-D2 (291 aa).

The segment at 261-291 is disordered; it reads TRQQTQQRNSSKSVDELDQASTPTDVQDINL. The span at 279-291 shows a compositional bias: polar residues; it reads QASTPTDVQDINL. Threonine 282 bears the Phosphothreonine mark.

It belongs to the cyclin family. Cyclin D subfamily. As to quaternary structure, interacts with the cdk4 and cdk6 protein kinases to form a serine/threonine kinase holoenzyme complex. The cyclin subunit imparts substrate specificity to the complex. In terms of processing, phosphorylation at Thr-282 by MAP kinases is required for ubiquitination and degradation by the DCX(AMBRA1) complex. Post-translationally, ubiquitinated by the DCX(AMBRA1) complex during the transition from G1 to S cell phase, leading to its degradation: ubiquitination is dependent on Thr-282 phosphorylation. The DCX(AMBRA1) complex represents the major regulator of CCND2 stability during the G1/S transition.

The protein localises to the nucleus. Its subcellular location is the cytoplasm. It is found in the nucleus membrane. Regulatory component of the cyclin D2-CDK4 (DC) complex that phosphorylates and inhibits members of the retinoblastoma (RB) protein family including RB1 and regulates the cell-cycle during G(1)/S transition. Phosphorylation of RB1 allows dissociation of the transcription factor E2F from the RB/E2F complex and the subsequent transcription of E2F target genes which are responsible for the progression through the G(1) phase. Hypophosphorylates RB1 in early G(1) phase. Cyclin D-CDK4 complexes are major integrators of various mitogenenic and antimitogenic signals. This chain is G1/S-specific cyclin-D2 (ccnd2), found in Xenopus laevis (African clawed frog).